The following is a 121-amino-acid chain: Large ribosomal subunit protein uL22c (121 aa).

This sequence belongs to the universal ribosomal protein uL22 family. As to quaternary structure, part of the 50S ribosomal subunit.

The protein resides in the plastid. It localises to the chloroplast. This protein binds specifically to 23S rRNA. Functionally, the globular domain of the protein is located near the polypeptide exit tunnel on the outside of the subunit, while an extended beta-hairpin is found that lines the wall of the exit tunnel in the center of the 70S ribosome. The protein is Large ribosomal subunit protein uL22c (rpl22) of Welwitschia mirabilis (Tree tumbo).